Reading from the N-terminus, the 324-residue chain is Polyprenol dehydrogenase (324 aa).

Catalysis depends on Tyr-206, which acts as the Proton acceptor. The NAD(+) site is built by Tyr-206, Lys-210, and Thr-243.

It belongs to the short-chain dehydrogenases/reductases (SDR) family.

It localises to the lipid droplet. The catalysed reaction is a di-trans,poly-cis-polyprenol + NAD(+) = a di-trans,poly-cis-polyprenal + NADH + H(+). It carries out the reaction a di-trans,poly-cis-polyprenol + NADP(+) = a di-trans,poly-cis-polyprenal + NADPH + H(+). It catalyses the reaction a di-trans,poly-cis-dolichol + NADP(+) = a di-trans,poly-cis-dolichal + NADPH + H(+). The enzyme catalyses a di-trans,poly-cis-dolichol + NAD(+) = a di-trans,poly-cis-dolichal + NADH + H(+). The protein operates within protein modification; protein glycosylation. Its function is as follows. Oxidoreductase that plays a key role in early steps of protein N-linked glycosylation by mediating two non-consecutive steps in dolichol biosynthesis. Acts both as a NAD(+)-dependent dehydrogenase and as a NADPH-dependent reductase during the conversion of polyprenol into dolichol. First catalyzes the NAD(+)-dependent dehydrogenation of polyprenol into polyprenal; polyprenal is then reduced into dolichal by srd5a3. It then catalyzes the NADPH-dependent reduction of dolichal into dolichol. The protein is Polyprenol dehydrogenase of Danio rerio (Zebrafish).